Consider the following 484-residue polypeptide: Catalase (484 aa).

A Methionine sulfone modification is found at methionine 53. Active-site residues include histidine 54 and asparagine 127. Tyrosine 337 provides a ligand contact to heme.

In terms of assembly, homotetramer. Heme is required as a cofactor. It depends on NADP(+) as a cofactor.

The protein localises to the cytoplasm. It catalyses the reaction 2 H2O2 = O2 + 2 H2O. Its function is as follows. Decomposes hydrogen peroxide into water and oxygen; serves to protect cells from the toxic effects of hydrogen peroxide. The protein is Catalase (katA) of Proteus mirabilis.